The primary structure comprises 313 residues: 2-phosphoglycerate kinase (313 aa).

One can recognise an ATP-cone domain in the interval 8–95 (SRILVTDKEY…LWRRVLKKHS (88 aa)).

This sequence belongs to the 2-phosphoglycerate kinase family. A divalent metal cation serves as cofactor.

The catalysed reaction is (2R)-2-phosphoglycerate + ATP = (2R)-2,3-bisphosphoglycerate + ADP + H(+). It functions in the pathway thermoadapter biosynthesis; cyclic 2,3-diphosphoglycerate biosynthesis; cyclic 2,3-diphosphoglycerate from 2-phospho-D-glycerate: step 1/2. Functionally, catalyzes the phosphorylation of 2-phosphoglycerate to 2,3-diphosphoglycerate. Involved in the biosynthesis of cyclic 2,3-bisphosphoglycerate, a thermoprotectant. The polypeptide is 2-phosphoglycerate kinase (Methanococcus maripaludis (strain C6 / ATCC BAA-1332)).